A 365-amino-acid polypeptide reads, in one-letter code: Aminomethyltransferase (365 aa).

Belongs to the GcvT family. The glycine cleavage system is composed of four proteins: P, T, L and H.

The catalysed reaction is N(6)-[(R)-S(8)-aminomethyldihydrolipoyl]-L-lysyl-[protein] + (6S)-5,6,7,8-tetrahydrofolate = N(6)-[(R)-dihydrolipoyl]-L-lysyl-[protein] + (6R)-5,10-methylene-5,6,7,8-tetrahydrofolate + NH4(+). In terms of biological role, the glycine cleavage system catalyzes the degradation of glycine. The protein is Aminomethyltransferase of Yersinia pestis bv. Antiqua (strain Antiqua).